The following is a 474-amino-acid chain: MQVTETLNEGLKREIQVMVPMKDLEAKLNERLDDTKGKIKLNGFRPGKVPSSYLRKMYGKSFMAEVLNEIINDAPRSILVDRNERSAVQPQIDINEDQKVLDGEADFIFNLKYEVLPEFEIKDFKDIEITREIADVSEQEIDEEVKKILSSTRSYSEGDAPSEEGDRVTIDYLGKIDDVPFDGGTGHDVQLVLGSNQFIPGFEEQLVGVKAGDTKAISVKFPDNYGVAHLAGKDAVFNITVKTVSKPDELKIDDEAAKKLGLESLDRLREVVQGQIENQYGLMTRQKIKRQILDSLDADYNFEIPERLVEIEFNNIWAQVNSDLQKSGRSFEDENTTEEKAREEYHMLAQRRVRLGLVLSEIGMKANIQVSESELQTAIFEQVRQYPGQEKEIMNFFRRTPEAIANLRAPIFEEKVIDYLLTHIKIKDKKVTVEELMKEFDESDAIEKSLVKKKTASDNKKSNEIKKKSTMKKV.

One can recognise a PPIase FKBP-type domain in the interval 165–250 (GDRVTIDYLG…VKTVSKPDEL (86 aa)). Over residues 451 to 467 (VKKKTASDNKKSNEIKK) the composition is skewed to basic and acidic residues. The tract at residues 451–474 (VKKKTASDNKKSNEIKKKSTMKKV) is disordered.

It belongs to the FKBP-type PPIase family. Tig subfamily.

The protein resides in the cytoplasm. The catalysed reaction is [protein]-peptidylproline (omega=180) = [protein]-peptidylproline (omega=0). Involved in protein export. Acts as a chaperone by maintaining the newly synthesized protein in an open conformation. Functions as a peptidyl-prolyl cis-trans isomerase. The polypeptide is Trigger factor (Bartonella bacilliformis (strain ATCC 35685 / KC583 / Herrer 020/F12,63)).